The primary structure comprises 351 residues: Dihydroorotate dehydrogenase (quinone) (351 aa).

Residues 61–65 (AGLDK) and Thr-85 contribute to the FMN site. Lys-65 contacts substrate. Residue 110–114 (NRMGF) coordinates substrate. FMN contacts are provided by Asn-139 and Asn-172. Residue Asn-172 coordinates substrate. The active-site Nucleophile is Ser-175. Residue Asn-177 coordinates substrate. FMN contacts are provided by Lys-217 and Thr-245. Residue 246-247 (NT) participates in substrate binding. FMN is bound by residues Gly-268, Gly-297, and 318 to 319 (YS).

The protein belongs to the dihydroorotate dehydrogenase family. Type 2 subfamily. As to quaternary structure, monomer. Requires FMN as cofactor.

The protein resides in the cell membrane. The enzyme catalyses (S)-dihydroorotate + a quinone = orotate + a quinol. Its pathway is pyrimidine metabolism; UMP biosynthesis via de novo pathway; orotate from (S)-dihydroorotate (quinone route): step 1/1. Its function is as follows. Catalyzes the conversion of dihydroorotate to orotate with quinone as electron acceptor. In Stenotrophomonas maltophilia (strain R551-3), this protein is Dihydroorotate dehydrogenase (quinone).